Consider the following 292-residue polypeptide: Geranyl diphosphate 2-C-methyltransferase (292 aa).

It belongs to the geranyl diphosphate 2-C-methyltransferase family. Mg(2+) is required as a cofactor.

It carries out the reaction (2E)-geranyl diphosphate + S-adenosyl-L-methionine = (E)-2-methylgeranyl diphosphate + S-adenosyl-L-homocysteine + H(+). Its function is as follows. Catalyzes the SAM-dependent methylation of geranyl diphosphate (GPP) to yield (E)-2-methylgeranyl diphosphate (2-MeGPP). This is Geranyl diphosphate 2-C-methyltransferase from Streptomyces coelicolor (strain ATCC BAA-471 / A3(2) / M145).